The primary structure comprises 78 residues: Small ribosomal subunit protein uS19m (78 aa).

The protein belongs to the universal ribosomal protein uS19 family.

Its subcellular location is the mitochondrion. This Acanthamoeba castellanii (Amoeba) protein is Small ribosomal subunit protein uS19m (RPS19).